The primary structure comprises 483 residues: 6-phosphogluconate dehydrogenase, decarboxylating 1 (483 aa).

NADP(+)-binding positions include 11–16 (GLAVMG), 34–36 (NRT), 78–80 (VKA), and Asn106. Residues Asn106 and 132 to 134 (SGG) contribute to the substrate site. Catalysis depends on Lys186, which acts as the Proton acceptor. A substrate-binding site is contributed by 189–190 (HN). The active-site Proton donor is Glu193. Residues Tyr194, Lys264, Arg291, Arg454, and His460 each contribute to the substrate site.

It belongs to the 6-phosphogluconate dehydrogenase family. As to quaternary structure, homodimer.

Its subcellular location is the cytoplasm. It catalyses the reaction 6-phospho-D-gluconate + NADP(+) = D-ribulose 5-phosphate + CO2 + NADPH. Its pathway is carbohydrate degradation; pentose phosphate pathway; D-ribulose 5-phosphate from D-glucose 6-phosphate (oxidative stage): step 3/3. Functionally, catalyzes the oxidative decarboxylation of 6-phosphogluconate to ribulose 5-phosphate and CO(2), with concomitant reduction of NADP to NADPH. The sequence is that of 6-phosphogluconate dehydrogenase, decarboxylating 1 (pgdC) from Spinacia oleracea (Spinach).